We begin with the raw amino-acid sequence, 106 residues long: 3-phenylpropionate/cinnamic acid dioxygenase ferredoxin subunit (106 aa).

One can recognise a Rieske domain in the interval 4-99 (IYACPVADVP…VHVEGSDIFI (96 aa)). The [2Fe-2S] cluster site is built by Cys42, His44, Cys62, and His65.

It belongs to the bacterial ring-hydroxylating dioxygenase ferredoxin component family. This dioxygenase system consists of four proteins: the two subunits of the hydroxylase component (HcaE and HcaF), a ferredoxin (HcaC) and a ferredoxin reductase (HcaD). Requires [2Fe-2S] cluster as cofactor.

It functions in the pathway aromatic compound metabolism; 3-phenylpropanoate degradation. Its function is as follows. Part of the multicomponent 3-phenylpropionate dioxygenase, that converts 3-phenylpropionic acid (PP) and cinnamic acid (CI) into 3-phenylpropionate-dihydrodiol (PP-dihydrodiol) and cinnamic acid-dihydrodiol (CI-dihydrodiol), respectively. This protein seems to be a 2Fe-2S ferredoxin. This Shigella boydii serotype 4 (strain Sb227) protein is 3-phenylpropionate/cinnamic acid dioxygenase ferredoxin subunit.